The following is a 388-amino-acid chain: Succinyl-diaminopimelate desuccinylase (388 aa).

A Zn(2+)-binding site is contributed by His-74. Asp-76 is a catalytic residue. A Zn(2+)-binding site is contributed by Asp-107. Catalysis depends on Glu-142, which acts as the Proton acceptor. Zn(2+) contacts are provided by Glu-143, Glu-171, and His-360.

Belongs to the peptidase M20A family. DapE subfamily. Homodimer. Requires Zn(2+) as cofactor. It depends on Co(2+) as a cofactor.

It catalyses the reaction N-succinyl-(2S,6S)-2,6-diaminopimelate + H2O = (2S,6S)-2,6-diaminopimelate + succinate. Its pathway is amino-acid biosynthesis; L-lysine biosynthesis via DAP pathway; LL-2,6-diaminopimelate from (S)-tetrahydrodipicolinate (succinylase route): step 3/3. Its function is as follows. Catalyzes the hydrolysis of N-succinyl-L,L-diaminopimelic acid (SDAP), forming succinate and LL-2,6-diaminopimelate (DAP), an intermediate involved in the bacterial biosynthesis of lysine and meso-diaminopimelic acid, an essential component of bacterial cell walls. This is Succinyl-diaminopimelate desuccinylase from Rhodopseudomonas palustris (strain BisB5).